Here is a 243-residue protein sequence, read N- to C-terminus: MKSSQDDLYAKPYQQVSDFQFDNKVAGVFNDMIRRSVPGYGQIINTIGDLAQKYATPNSKIYDLGCSLGAATLSVRRRVEGRNCQIIAVDNSESMIERCKENLSAYVSETPVKLVCGDIRDIEIENASLVILNFTMQFLAPEHRQSLLKKIYDGLQPGGLLVLSEKLYFEQDKIQSTLDDLHLDFKRANGYSELEISQKRSSLEHVMKPDTLEQHKIRIKQQGFSQFSVWFQCFNFASMVAIK.

S-adenosyl-L-methionine is bound by residues Y40, 65-67 (GCS), 90-91 (DN), 118-119 (DI), N133, and R200.

The protein belongs to the class I-like SAM-binding methyltransferase superfamily. Cx-SAM synthase family. As to quaternary structure, homodimer.

It carries out the reaction prephenate + S-adenosyl-L-methionine = carboxy-S-adenosyl-L-methionine + 3-phenylpyruvate + H2O. Catalyzes the conversion of S-adenosyl-L-methionine (SAM) to carboxy-S-adenosyl-L-methionine (Cx-SAM). In Shewanella piezotolerans (strain WP3 / JCM 13877), this protein is Carboxy-S-adenosyl-L-methionine synthase.